The primary structure comprises 492 residues: Ketol-acid reductoisomerase (NADP(+)) (492 aa).

Residues 15–208 (AQLGKCRFMA…GAHRAGVLES (194 aa)) enclose the KARI N-terminal Rossmann domain. NADP(+)-binding positions include 45–48 (CGAQ), Arg-68, Arg-76, Ser-78, and 108–110 (DKQ). His-132 is an active-site residue. Gly-158 contacts NADP(+). KARI C-terminal knotted domains are found at residues 209 to 344 (SFVA…NSPE) and 345 to 485 (YDGK…MTDM). Mg(2+)-binding residues include Asp-217, Glu-221, Glu-389, and Glu-393. Ser-414 serves as a coordination point for substrate.

It belongs to the ketol-acid reductoisomerase family. It depends on Mg(2+) as a cofactor.

The catalysed reaction is (2R)-2,3-dihydroxy-3-methylbutanoate + NADP(+) = (2S)-2-acetolactate + NADPH + H(+). It carries out the reaction (2R,3R)-2,3-dihydroxy-3-methylpentanoate + NADP(+) = (S)-2-ethyl-2-hydroxy-3-oxobutanoate + NADPH + H(+). It participates in amino-acid biosynthesis; L-isoleucine biosynthesis; L-isoleucine from 2-oxobutanoate: step 2/4. It functions in the pathway amino-acid biosynthesis; L-valine biosynthesis; L-valine from pyruvate: step 2/4. Functionally, involved in the biosynthesis of branched-chain amino acids (BCAA). Catalyzes an alkyl-migration followed by a ketol-acid reduction of (S)-2-acetolactate (S2AL) to yield (R)-2,3-dihydroxy-isovalerate. In the isomerase reaction, S2AL is rearranged via a Mg-dependent methyl migration to produce 3-hydroxy-3-methyl-2-ketobutyrate (HMKB). In the reductase reaction, this 2-ketoacid undergoes a metal-dependent reduction by NADPH to yield (R)-2,3-dihydroxy-isovalerate. The sequence is that of Ketol-acid reductoisomerase (NADP(+)) from Photorhabdus laumondii subsp. laumondii (strain DSM 15139 / CIP 105565 / TT01) (Photorhabdus luminescens subsp. laumondii).